A 377-amino-acid chain; its full sequence is 5-hydroxytryptamine receptor 1D (377 aa).

N5, N17, and N21 each carry an N-linked (GlcNAc...) asparagine glycan. 3 consecutive transmembrane segments (helical) span residues 39 to 64, 76 to 97, and 110 to 134; these read ISLA…TTIL, LIGS…ISIA, and LCDI…VIAL. A disulfide bridge links C111 with C188. Serotonin contacts are provided by D118 and C122. The DRY motif; important for ligand-induced conformation changes motif lies at 135–137; the sequence is DRY. Helical transmembrane passes span 155-176, 195-218, 301-326, and 336-359; these read AAAM…PLFW, ISYT…VLYG, KTLG…VLPI, and GLFD…YTVF. Position 321 (S321) interacts with serotonin. The NPxxY motif; important for ligand-induced conformation changes and signaling motif lies at 352–356; sequence NPIIY.

This sequence belongs to the G-protein coupled receptor 1 family. As to quaternary structure, homodimer. Heterodimer with HTR1B.

The protein localises to the cell membrane. In terms of biological role, G-protein coupled receptor for 5-hydroxytryptamine (serotonin). Also functions as a receptor for ergot alkaloid derivatives, various anxiolytic and antidepressant drugs and other psychoactive substances. Ligand binding causes a conformation change that triggers signaling via guanine nucleotide-binding proteins (G proteins) and modulates the activity of downstream effectors, such as adenylate cyclase. HTR1D is coupled to G(i)/G(o) G alpha proteins and mediates inhibitory neurotransmission by inhibiting adenylate cyclase activity. Regulates the release of 5-hydroxytryptamine in the brain, and thereby affects neural activity. May also play a role in regulating the release of other neurotransmitters. May play a role in vasoconstriction. The chain is 5-hydroxytryptamine receptor 1D (HTR1D) from Oryctolagus cuniculus (Rabbit).